A 349-amino-acid polypeptide reads, in one-letter code: Anthranilate phosphoribosyltransferase (349 aa).

Residues Gly82, 85–86 (GD), 92–95 (NVST), 110–118 (KHGNRAVSG), and Ser122 each bind 5-phospho-alpha-D-ribose 1-diphosphate. Gly82 provides a ligand contact to anthranilate. Ser94 contributes to the Mg(2+) binding site. Asn113 contacts anthranilate. Anthranilate is bound at residue Arg168. Residues Asp227 and Glu228 each contribute to the Mg(2+) site.

The protein belongs to the anthranilate phosphoribosyltransferase family. In terms of assembly, homodimer. Requires Mg(2+) as cofactor.

The catalysed reaction is N-(5-phospho-beta-D-ribosyl)anthranilate + diphosphate = 5-phospho-alpha-D-ribose 1-diphosphate + anthranilate. It participates in amino-acid biosynthesis; L-tryptophan biosynthesis; L-tryptophan from chorismate: step 2/5. Its function is as follows. Catalyzes the transfer of the phosphoribosyl group of 5-phosphorylribose-1-pyrophosphate (PRPP) to anthranilate to yield N-(5'-phosphoribosyl)-anthranilate (PRA). In Pseudomonas entomophila (strain L48), this protein is Anthranilate phosphoribosyltransferase.